Consider the following 397-residue polypeptide: Teichoic acid D-alanine hydrolase (397 aa).

Residues 1–23 (MKFNKVKLVIHACVLLFIIISIA) form the signal peptide.

The protein resides in the cell membrane. It carries out the reaction [(4-D-Ala)-(2-GlcNAc)-Rib-ol-P]n-[Gro-P]m-beta-D-ManNAc-(1-&gt;4)-alpha-D-GlcNAc-P-peptidoglycan + n H2O = [(2-GlcNAc)-Rib-ol-P]n-[Gro-P]m-beta-D-ManNAc-(1-&gt;4)-alpha-D-GlcNAc-P-peptidoglycan + n D-alanine.. Its function is as follows. Catalyzes the liberation of D-alanyl moieties present on wall teichoic acid (WTA) and lipoteichoic acid (LTA). Affects the methicillin resistance level and autolysis in the presence of Triton X-100 as well as the cell wall structure. The chain is Teichoic acid D-alanine hydrolase (fmtA) from Staphylococcus aureus (strain NCTC 8325 / PS 47).